The chain runs to 308 residues: Malonyl CoA-acyl carrier protein transacylase (308 aa).

Active-site residues include S89 and H199.

This sequence belongs to the FabD family.

The enzyme catalyses holo-[ACP] + malonyl-CoA = malonyl-[ACP] + CoA. It participates in lipid metabolism; fatty acid biosynthesis. The polypeptide is Malonyl CoA-acyl carrier protein transacylase (fabD) (Staphylococcus aureus (strain Mu50 / ATCC 700699)).